The sequence spans 194 residues: Molybdenum cofactor guanylyltransferase (194 aa).

GTP contacts are provided by residues 12 to 14 (LAG), lysine 25, aspartate 71, and aspartate 101. Aspartate 101 is a binding site for Mg(2+).

The protein belongs to the MobA family. In terms of assembly, monomer. Requires Mg(2+) as cofactor.

The protein localises to the cytoplasm. The enzyme catalyses Mo-molybdopterin + GTP + H(+) = Mo-molybdopterin guanine dinucleotide + diphosphate. In terms of biological role, transfers a GMP moiety from GTP to Mo-molybdopterin (Mo-MPT) cofactor (Moco or molybdenum cofactor) to form Mo-molybdopterin guanine dinucleotide (Mo-MGD) cofactor. The chain is Molybdenum cofactor guanylyltransferase from Salmonella typhimurium (strain LT2 / SGSC1412 / ATCC 700720).